Here is a 252-residue protein sequence, read N- to C-terminus: MWRMRMRLLTGYLVLLALGQLPEHGALGQKYYMNFAFNNNNPDGEGGTGVDGGGGGAGGGAAGPGGGTGDSPHSQEGDGSAATDNPNDDHATSADNSLATDGDAIGKKESGGGSDGKSDSKDSSGGNDATPANGHDDDNDDSDSKDAKDRQDKEEEAGQEGKRTDHSHHSSYEISIDDSFGGRYVRSIYESSESHGHSGSNAGSNQRDNGARESSQENQDAKEVASEAPAQRAGNVPDGPETGAKEDDYEEM.

Positions 1–19 are cleaved as a signal peptide; sequence MWRMRMRLLTGYLVLLALG. Residues 42-252 form a disordered region; sequence PDGEGGTGVD…GAKEDDYEEM (211 aa). A compositionally biased stretch (gly residues) spans 44 to 69; sequence GEGGTGVDGGGGGAGGGAAGPGGGTG. 4 stretches are compositionally biased toward basic and acidic residues: residues 104–122, 142–153, 159–171, and 209–225; these read AIGK…DSKD, SDSKDAKDRQDK, QEGK…HHSS, and NGAR…KEVA.

As to expression, seminal fluid.

Its subcellular location is the secreted. In terms of biological role, responsible for physiological and behavioral changes in mated female flies. In Drosophila melanogaster (Fruit fly), this protein is Accessory gland protein Acp32CD (Acp32CD).